The primary structure comprises 135 residues: Large-conductance mechanosensitive channel (135 aa).

Helical transmembrane passes span 10–30 (FAMK…AAFG) and 76–96 (GAFI…FCAI).

The protein belongs to the MscL family. In terms of assembly, homopentamer.

It localises to the cell inner membrane. Channel that opens in response to stretch forces in the membrane lipid bilayer. May participate in the regulation of osmotic pressure changes within the cell. The protein is Large-conductance mechanosensitive channel of Proteus mirabilis (strain HI4320).